A 710-amino-acid chain; its full sequence is DNA ligase (710 aa).

NAD(+) is bound by residues 53-57 (DAEYD), 102-103 (SL), and Glu-136. Lys-138 serves as the catalytic N6-AMP-lysine intermediate. 4 residues coordinate NAD(+): Arg-159, Glu-196, Lys-312, and Lys-336. Positions 429, 432, 453, and 459 each coordinate Zn(2+). One can recognise a BRCT domain in the interval 633–710 (ETSSPVAGKT…DEDQWIELAG (78 aa)).

It belongs to the NAD-dependent DNA ligase family. LigA subfamily. Requires Mg(2+) as cofactor. Mn(2+) serves as cofactor.

The enzyme catalyses NAD(+) + (deoxyribonucleotide)n-3'-hydroxyl + 5'-phospho-(deoxyribonucleotide)m = (deoxyribonucleotide)n+m + AMP + beta-nicotinamide D-nucleotide.. DNA ligase that catalyzes the formation of phosphodiester linkages between 5'-phosphoryl and 3'-hydroxyl groups in double-stranded DNA using NAD as a coenzyme and as the energy source for the reaction. It is essential for DNA replication and repair of damaged DNA. This is DNA ligase from Parvibaculum lavamentivorans (strain DS-1 / DSM 13023 / NCIMB 13966).